A 796-amino-acid polypeptide reads, in one-letter code: Toll-like receptor 6 (796 aa).

Residues 1–31 (MTKDKEPIVKSFHFVCLMIIIVGTRIQFSDG) form the signal peptide. The Extracellular segment spans residues 32 to 586 (NEFAVDKSKR…MSELSCNITL (555 aa)). LRR repeat units follow at residues 54–77 (TKVL…FLSE), 78–101 (LTVL…FNQD), 102–122 (LEYL…PIVS), 123–147 (FRHL…NLSQ), 148–168 (LNFL…PIAH), 169–196 (LHLS…ILNA), 197–219 (KTLH…SVNT), 220–250 (LGCL…RGST), 251–277 (LLNF…WPKP), 278–303 (VEYL…SKTT), 304–330 (LKAL…VFSE), 331–354 (MNIM…APST), 355–378 (FKFL…TLVK), 379–404 (LETL…DMPS), 405–429 (LEIL…WVES), 430–450 (IVVL…CLPP), 451–474 (RIKV…KLEA), 475–496 (LQEL…SFSS), and 497–520 (LSVL…SCQK). A disulfide bond links C117 and C139. A glycan (N-linked (GlcNAc...) asparagine) is linked at N144. N186 and N214 each carry an N-linked (GlcNAc...) asparagine glycan. A disulfide bridge connects residues C235 and C265. N-linked (GlcNAc...) asparagine glycans are attached at residues N253 and N285. Cysteines 348 and 373 form a disulfide. N-linked (GlcNAc...) asparagine glycosylation is present at N359. 2 N-linked (GlcNAc...) asparagine glycosylation sites follow: N423 and N434. A disulfide bridge connects residues C424 and C447. Residues 521–575 (MRSIKAGDNPFQCTCELREFVKNIDQVSSEVLEGWPDSYKCDYPESYRGSPLKDF) enclose the LRRCT domain. N583 is a glycosylation site (N-linked (GlcNAc...) asparagine). The chain crosses the membrane as a helical span at residues 587–607 (LIVTIGATMLVLAVTVTSLCI). The Cytoplasmic portion of the chain corresponds to 608-796 (YLDLPWYLRM…LVTENNDVKS (189 aa)). One can recognise a TIR domain in the interval 640–781 (LQFHAFISYS…LFWANIRAAF (142 aa)).

Belongs to the Toll-like receptor family. In terms of assembly, homodimer (via cytoplasmic TIR domain). Heterodimer with TLR2 via their respective extracellular domains. Binds MYD88 via their respective TIR domains. Interacts with CD36, following CD36 stimulation by oxLDL or amyloid-beta 42, and forms a heterodimer with TLR4. The trimeric complex is internalized and triggers inflammatory response. LYN kinase activity facilitates TLR4:TLR6 heterodimerization and signal initiation. The heterodimer TLR2:TLR6 interacts with CD14 and CD36 in response to triacylated lipopeptides. As to expression, detected in monocytes, CD11c+ immature dendritic cells, plasmacytoid pre-dendritic cells and dermal microvessel endothelial cells.

It is found in the cell membrane. The protein resides in the cytoplasmic vesicle. The protein localises to the phagosome membrane. It localises to the membrane raft. Its subcellular location is the golgi apparatus. Functionally, participates in the innate immune response to Gram-positive bacteria and fungi. Specifically recognizes diacylated and, to a lesser extent, triacylated lipopeptides. In response to diacylated lipopeptides, forms the activation cluster TLR2:TLR6:CD14:CD36, this cluster triggers signaling from the cell surface and subsequently is targeted to the Golgi in a lipid-raft dependent pathway. Acts via MYD88 and TRAF6, leading to NF-kappa-B activation, cytokine secretion and the inflammatory response. Recognizes mycoplasmal macrophage-activating lipopeptide-2kD (MALP-2), soluble tuberculosis factor (STF), phenol-soluble modulin (PSM) and B.burgdorferi outer surface protein A lipoprotein (OspA-L) cooperatively with TLR2. In complex with TLR4, promotes sterile inflammation in monocytes/macrophages in response to oxidized low-density lipoprotein (oxLDL) or amyloid-beta 42. In this context, the initial signal is provided by oxLDL- or amyloid-beta 42-binding to CD36. This event induces the formation of a heterodimer of TLR4 and TLR6, which is rapidly internalized and triggers inflammatory response, leading to the NF-kappa-B-dependent production of CXCL1, CXCL2 and CCL9 cytokines, via MYD88 signaling pathway, and CCL5 cytokine, via TICAM1 signaling pathway, as well as IL1B secretion. This chain is Toll-like receptor 6 (TLR6), found in Homo sapiens (Human).